The following is a 258-amino-acid chain: Imidazole glycerol phosphate synthase subunit HisF (258 aa).

Residues Asp-11 and Asp-130 contribute to the active site.

It belongs to the HisA/HisF family. In terms of assembly, heterodimer of HisH and HisF.

The protein localises to the cytoplasm. It carries out the reaction 5-[(5-phospho-1-deoxy-D-ribulos-1-ylimino)methylamino]-1-(5-phospho-beta-D-ribosyl)imidazole-4-carboxamide + L-glutamine = D-erythro-1-(imidazol-4-yl)glycerol 3-phosphate + 5-amino-1-(5-phospho-beta-D-ribosyl)imidazole-4-carboxamide + L-glutamate + H(+). The protein operates within amino-acid biosynthesis; L-histidine biosynthesis; L-histidine from 5-phospho-alpha-D-ribose 1-diphosphate: step 5/9. Its function is as follows. IGPS catalyzes the conversion of PRFAR and glutamine to IGP, AICAR and glutamate. The HisF subunit catalyzes the cyclization activity that produces IGP and AICAR from PRFAR using the ammonia provided by the HisH subunit. In Yersinia pseudotuberculosis serotype IB (strain PB1/+), this protein is Imidazole glycerol phosphate synthase subunit HisF.